We begin with the raw amino-acid sequence, 2362 residues long: Filaggrin-2 (2362 aa).

An S-100-like region spans residues 1 to 81 (MAYLLRSVVT…TEFILMIFKL (81 aa)). 2 consecutive EF-hand domains span residues 8 to 43 (VVTIIDVFYKYTKQDEECGTLSKDELKELLEKEFRP) and 49 to 84 (DDPDTVDVIMHMLDRDHDRRLDFTEFILMIFKLALA). Ca(2+) is bound by residues Asp62, Asp64, Asp66, Arg68, and Glu73. 2 disordered regions span residues 96–238 (ASGS…GLSC) and 284–2109 (GCCR…SSIP). Over residues 111–120 (EESETEEEEE) the composition is skewed to acidic residues. 2 stretches are compositionally biased toward basic and acidic residues: residues 159–174 (KRLERQDELSSSEESR) and 189–214 (NKEKDGSRSEELGEKGDKSYDSPSRE). Filaggrin repeat units follow at residues 261-308 (GYNT…NQSC) and 373-414 (HSSC…SNGF). 3 stretches are compositionally biased toward polar residues: residues 284-317 (GCCRPKNASSSCQASRSQGQGNQSCRTQSNCQSG), 342-375 (SCSQSSSQRGYGSKQCGQPQNCGRQQRMGSSHSS), and 383-395 (GATQSSGCGQQRM). Over residues 396–411 (SSCGHSSSSHQKGCSS) the composition is skewed to low complexity. Polar residues-rich tracts occupy residues 421-443 (ASGSGHSSCCEQHGTNSSQSSGF) and 450-469 (SGQSCCGQHGTASSQSSGYS). 3 stretches are compositionally biased toward low complexity: residues 474–519 (GSGQ…QSSG), 539–550 (GSRQSSGSEQHG), and 567–580 (SQSSSSGHHGSGSQ). One copy of the Filaggrin 3 repeat lies at 555 to 607 (QSSGSGKHETGPSQSSSSGHHGSGSQQHGGGSGQSTGFGEHESSSGHSSSSGQ). Residues 581–590 (QHGGGSGQST) show a composition bias toward gly residues. A compositionally biased stretch (low complexity) spans 599–618 (SGHSSSSGQHRSGSRHSSGS). Residues 632–653 (GHHGSGSQQHGGGSGNSTGFGE) show a composition bias toward gly residues. The segment covering 654–675 (HGSSSHPLPSSGQNESSSGQSS) has biased composition (low complexity). The stretch at 672–723 (GQSSRSERHGTGSGQSSGFGQHGSGSHQSSSSGHNEYGSGQTSSSWPHGKGS) is one Filaggrin 4 repeat. Positions 682–694 (TGSGQSSGFGQHG) are enriched in gly residues. Composition is skewed to low complexity over residues 695-705 (SGSHQSSSSGH), 728-754 (GYGEQESGHGQSSSSWQHGTGPGQSSS), and 780-798 (GYGEQEAGHGQSSSSWQHG). Residues 826–838 (TGSGQSLGFGQHG) show a composition bias toward gly residues. Over residues 846 to 864 (SSGHYESVSEPSSSSWQHG) the composition is skewed to low complexity. One copy of the Filaggrin 5 repeat lies at 880 to 927 (HGQSSSAWNHGNESGQSNGYGEHESGHGQSSSAWNHGNESGQSNGFGE). Polar residues-rich tracts occupy residues 886-896 (AWNHGNESGQS) and 912-925 (AWNHGNESGQSNGF). The span at 973-982 (ESSEGEEHSV) shows a compositional bias: basic and acidic residues. One copy of the Filaggrin 6 repeat lies at 984–1035 (PRRYSGYGHGQGQAGHQQRESGYGQRGRPQGPSQDSSRQPQAGHGQPSQSGY). Polar residues predominate over residues 1014–1035 (GPSQDSSRQPQAGHGQPSQSGY). The span at 1047–1059 (EYSEGEAHSEVSQ) shows a compositional bias: basic and acidic residues. The span at 1067–1077 (CHCHCHGQARH) shows a compositional bias: basic residues. Residues 1104 to 1121 (GPGQPSQSGSRRSPRSQP) show a composition bias toward low complexity. The segment covering 1142–1152 (SGHGHGQGQGQ) has biased composition (gly residues). A compositionally biased stretch (polar residues) spans 1162–1174 (HGQQGRPQGPSQD). A Filaggrin 7 repeat occupies 1165–1210 (QGRPQGPSQDSSRQPQAGQGQPSQSGSGRSPRRSPVHPESSEGEEH). Residues 1175 to 1193 (SSRQPQAGQGQPSQSGSGR) are compositionally biased toward low complexity. 3 positions are modified to phosphoserine: Ser1198, Ser1204, and Ser1205. Residues 1220 to 1232 (SGHGHGQGQGQGQ) are compositionally biased toward gly residues. A compositionally biased stretch (low complexity) spans 1255–1273 (SSRQPQAGQGQPSQSGSGR). Phosphoserine occurs at positions 1278, 1284, and 1285. The stretch at 1280-1334 (VHPESSEGEEHSVVPQRHSGSGHGHGQGQGQAGHQQRESVHGQPVRPEVPTQDSS) is one Filaggrin 8 repeat. Positions 1300 to 1310 (SGHGHGQGQGQ) are enriched in gly residues. Over residues 1333–1351 (SSRQPQAGQGQPSQSGSGR) the composition is skewed to low complexity. 3 positions are modified to phosphoserine: Ser1356, Ser1362, and Ser1363. Positions 1377–1396 (ESCHCHCHDQAGHQQRESVH) are enriched in basic and acidic residues. Residues 1413–1436 (PQAGPGQPSQSGSRRSPRSSPVHP) are compositionally biased toward low complexity. Residues Ser1438 and Ser1439 each carry the phosphoserine modification. Residues 1454–1464 (SGHGHGQGQGQ) are compositionally biased toward gly residues. The Filaggrin 9 repeat unit spans residues 1474–1522 (HGQRGRPQGPTQDSSRQPQAGQGQPSQSGSGRSPRRSPVHPESSEGEEH). Positions 1487–1505 (SSRQPQAGQGQPSQSGSGR) are enriched in low complexity. Residues Ser1510, Ser1516, and Ser1517 each carry the phosphoserine modification. Gly residues predominate over residues 1532 to 1544 (SGHGHGHGQGQGQ). Low complexity predominate over residues 1567–1585 (SSRQPQAGQGQPSQSGSGR). Phosphoserine occurs at positions 1590, 1596, and 1597. Composition is skewed to low complexity over residues 1643 to 1661 (SSRQPQAGQGQPSQSGSGR) and 1683 to 1696 (QRHSGSGHSHGQGQ). Positions 1698-1708 (HAEHQQRESVH) are enriched in basic and acidic residues. A Filaggrin 10 repeat occupies 1723-1756 (RQPQAGQGQPSLSGSGRSPRRSPVHPESSEGEEH). Positions 1724–1739 (QPQAGQGQPSLSGSGR) are enriched in low complexity. 6 positions are modified to phosphoserine: Ser1744, Ser1750, Ser1751, Ser1824, Ser1830, and Ser1831. Over residues 1801-1825 (SSRQPQAGQGQPSQSGSGRSPGRSP) the composition is skewed to low complexity. Residues 1829 to 1848 (ESSEGEEHSVVPQRHSESGH) are compositionally biased toward basic and acidic residues. Over residues 1879–1897 (SSRQPQAGQGQPSQSGSGR) the composition is skewed to low complexity. Ser1902, Ser1908, and Ser1909 each carry phosphoserine. Gly residues predominate over residues 1924-1934 (SGHGHGQGQGQ). Over residues 1949–1975 (RPQGPSQDSSSQPQASQGQPSQSGSGR) the composition is skewed to low complexity. Ser1980, Ser1986, and Ser1987 each carry phosphoserine. Over residues 2002–2012 (SGHGHGQGQGQ) the composition is skewed to gly residues. A Filaggrin 11 repeat occupies 2016 to 2070 (QQRESLHGQRGRSQSPFHPSHSIHWQSKCTISKKSSRLSGHYGRNHFQSTISGNQ). 3 stretches are compositionally biased toward polar residues: residues 2026–2048 (GRSQSPFHPSHSIHWQSKCTISK), 2061–2079 (HFQSTISGNQYDSSQSSRH), and 2100–2109 (LRSNSQSSIP). At Ser2104 the chain carries Phosphoserine. Residues 2218–2259 (DDSQYILFQKHLESPSFGNQSGFSPNERQLYTCNESIDSYHL) form a Filaggrin 12 repeat.

The protein belongs to the S100-fused protein family. It in the N-terminal section; belongs to the S-100 family. In terms of processing, deiminated by PADI1, PADI2 or PADI3 in vitro. The deiminated form is degraded by calpain-1/CAPN1 more quickly and into shorter peptides than the intact protein. Post-translationally, may be processed by calpain-1/CAPN1.

It localises to the cytoplasm. Its subcellular location is the cytoplasmic granule. Functionally, essential for normal cell-cell adhesion in the cornified cell layers. Important for proper integrity and mechanical strength of the stratum corneum of the epidermis. The sequence is that of Filaggrin-2 (Flg2) from Mus musculus (Mouse).